A 459-amino-acid chain; its full sequence is tRNA modification GTPase MnmE (459 aa).

(6S)-5-formyl-5,6,7,8-tetrahydrofolate-binding residues include arginine 22, glutamate 85, and arginine 124. Residues 221–380 (GLSTVIVGKP…LEIQIRDLFF (160 aa)) enclose the TrmE-type G domain. A K(+)-binding site is contributed by asparagine 231. GTP contacts are provided by residues 231–236 (NVGKSS), 250–256 (TEVAGTT), and 275–278 (DTAG). Serine 235 is a binding site for Mg(2+). 3 residues coordinate K(+): threonine 250, valine 252, and threonine 255. Threonine 256 provides a ligand contact to Mg(2+). Lysine 459 is a binding site for (6S)-5-formyl-5,6,7,8-tetrahydrofolate.

It belongs to the TRAFAC class TrmE-Era-EngA-EngB-Septin-like GTPase superfamily. TrmE GTPase family. In terms of assembly, homodimer. Heterotetramer of two MnmE and two MnmG subunits. K(+) serves as cofactor.

Its subcellular location is the cytoplasm. Exhibits a very high intrinsic GTPase hydrolysis rate. Involved in the addition of a carboxymethylaminomethyl (cmnm) group at the wobble position (U34) of certain tRNAs, forming tRNA-cmnm(5)s(2)U34. This is tRNA modification GTPase MnmE from Staphylococcus aureus (strain MW2).